The following is a 354-amino-acid chain: Uroporphyrinogen decarboxylase (354 aa).

Substrate is bound by residues 27 to 31, Asp-77, Tyr-154, Ser-209, and His-327; that span reads RQAGR.

The protein belongs to the uroporphyrinogen decarboxylase family. As to quaternary structure, homodimer.

The protein localises to the cytoplasm. It carries out the reaction uroporphyrinogen III + 4 H(+) = coproporphyrinogen III + 4 CO2. The protein operates within porphyrin-containing compound metabolism; protoporphyrin-IX biosynthesis; coproporphyrinogen-III from 5-aminolevulinate: step 4/4. Catalyzes the decarboxylation of four acetate groups of uroporphyrinogen-III to yield coproporphyrinogen-III. The sequence is that of Uroporphyrinogen decarboxylase from Shewanella putrefaciens (strain CN-32 / ATCC BAA-453).